The primary structure comprises 402 residues: uncharacterized protein (402 aa).

Helical transmembrane passes span 13–33, 68–88, 108–128, 149–169, 223–243, 261–281, 283–303, 327–347, and 353–373; these read IGVL…VNLA, FFIQ…GMVV, LMAL…GDIL, LLIW…LTSF, LNYF…AAAA, LWMA…VTDK, ICLL…VVYL, YLMQ…GLYG, and AGVL…HLWL.

The protein localises to the cell membrane. Functionally, involved in transport. This is an uncharacterized protein from Bacillus subtilis (strain 168).